The sequence spans 1166 residues: Serine-aspartate repeat-containing protein E (1166 aa).

Positions 1 to 52 (MINRDNKKAITKKGMISNRLNKFSIRKYTVGTASILVGTTLIFGLGNQEAKA) are cleaved as a signal peptide. The YSIRK-G/S signaling motif motif lies at 23–34 (FSIRKYTVGTAS). A ligand binding A region region spans residues 53-606 (AENTSTENAK…GDGTVKPEEK (554 aa)). The tract at residues 54–253 (ENTSTENAKQ…HSTKPVATAP (200 aa)) is disordered. Residues 61–75 (AKQDDATTSDNKEVV) show a composition bias toward basic and acidic residues. The segment covering 77–90 (ETENNSTTENNSTN) has biased composition (low complexity). A compositionally biased stretch (basic and acidic residues) spans 92 to 108 (IKKETNTDSQPEAKKES). A compositionally biased stretch (polar residues) spans 118 to 129 (NNVTATTETKPQ). A compositionally biased stretch (basic and acidic residues) spans 130 to 145 (NIEKENVKPSTDKTAT). Residues 166-178 (TTKPSTSEPSTSE) are compositionally biased toward low complexity. Residues 179–212 (IQTKPTTPQESTNIENSQPQPTPSKVDNQVTDAT) show a composition bias toward polar residues. Residues 221–246 (SKEELKKNPEKLKELVRNDSNTDHST) show a composition bias toward basic and acidic residues. 3 consecutive CNA-B domains span residues 607–719 (LYKI…YKEP), 720–829 (KYNL…YKTP), and 830–940 (KYSL…EEDT). A disordered region spans residues 904-1141 (VTNTTEDDKD…TGSENNGSNN (238 aa)). Acidic residues-rich tracts occupy residues 908 to 918 (TEDDKDADGGE) and 935 to 1105 (YFEE…DSDS). Residues 1129–1133 (LPETG) carry the LPXTG sorting signal motif. Threonine 1132 carries the pentaglycyl murein peptidoglycan amidated threonine modification. Positions 1133 to 1166 (GSENNGSNNATLFGGLFAALGSLLLFGRRKKQNK) are cleaved as a propeptide — removed by sortase.

It belongs to the serine-aspartate repeat-containing protein (SDr) family. Interacts with host complement factor H/CFAH (via C-terminus). Interacts with host complement regulator C4BPA.

The protein localises to the secreted. The protein resides in the cell wall. Functionally, cell surface-associated calcium-binding protein which plays an important role in adhesion and pathogenesis. Contributes to the resistance to killing by innate immune components in blood and thus attenuates bacterial clearance by interacting with host complement factor H/CFAH and modulating its activity. Also inhibits bacterial opsonization and killing by interacting with host complement regulator C4BPA and thus inhibiting classical complement pathway activation. In Staphylococcus aureus (strain COL), this protein is Serine-aspartate repeat-containing protein E (sdrE).